The following is a 316-amino-acid chain: Biotin synthase (316 aa).

Residues 36 to 264 form the Radical SAM core domain; the sequence is FDNRITLCAI…TATLRICGGR (229 aa). Positions 53, 57, and 60 each coordinate [4Fe-4S] cluster. The [2Fe-2S] cluster site is built by Cys129, Cys189, and Arg259.

The protein belongs to the radical SAM superfamily. Biotin synthase family. As to quaternary structure, homodimer. It depends on [4Fe-4S] cluster as a cofactor. Requires [2Fe-2S] cluster as cofactor.

The enzyme catalyses (4R,5S)-dethiobiotin + (sulfur carrier)-SH + 2 reduced [2Fe-2S]-[ferredoxin] + 2 S-adenosyl-L-methionine = (sulfur carrier)-H + biotin + 2 5'-deoxyadenosine + 2 L-methionine + 2 oxidized [2Fe-2S]-[ferredoxin]. It participates in cofactor biosynthesis; biotin biosynthesis; biotin from 7,8-diaminononanoate: step 2/2. Functionally, catalyzes the conversion of dethiobiotin (DTB) to biotin by the insertion of a sulfur atom into dethiobiotin via a radical-based mechanism. The chain is Biotin synthase from Desulfovibrio desulfuricans (strain ATCC 27774 / DSM 6949 / MB).